Consider the following 312-residue polypeptide: Ribosomal protein L11 methyltransferase (312 aa).

The S-adenosyl-L-methionine site is built by Thr162, Gly183, Asp205, and Asn248.

The protein belongs to the methyltransferase superfamily. PrmA family.

It localises to the cytoplasm. The catalysed reaction is L-lysyl-[protein] + 3 S-adenosyl-L-methionine = N(6),N(6),N(6)-trimethyl-L-lysyl-[protein] + 3 S-adenosyl-L-homocysteine + 3 H(+). In terms of biological role, methylates ribosomal protein L11. In Bacillus cereus (strain ATCC 10987 / NRS 248), this protein is Ribosomal protein L11 methyltransferase.